The following is a 156-amino-acid chain: Ribosomal RNA large subunit methyltransferase H (156 aa).

S-adenosyl-L-methionine-binding positions include Leu73, Gly104, and 123–128; that span reads LSALTL.

Belongs to the RNA methyltransferase RlmH family. Homodimer.

The protein localises to the cytoplasm. It catalyses the reaction pseudouridine(1915) in 23S rRNA + S-adenosyl-L-methionine = N(3)-methylpseudouridine(1915) in 23S rRNA + S-adenosyl-L-homocysteine + H(+). Specifically methylates the pseudouridine at position 1915 (m3Psi1915) in 23S rRNA. This Colwellia psychrerythraea (strain 34H / ATCC BAA-681) (Vibrio psychroerythus) protein is Ribosomal RNA large subunit methyltransferase H.